Reading from the N-terminus, the 64-residue chain is Large ribosomal subunit protein bL32 (64 aa).

The segment at Met-1–Glu-35 is disordered.

Belongs to the bacterial ribosomal protein bL32 family.

This Xanthomonas axonopodis pv. citri (strain 306) protein is Large ribosomal subunit protein bL32.